The chain runs to 100 residues: Trp operon repressor homolog (100 aa).

The DNA-binding element occupies 59-82 (QRQISQMLGVGIATITRGSNELKS). Residues 78-93 (NELKSKSDTDKDKLKT) are compositionally biased toward basic and acidic residues. A disordered region spans residues 78-100 (NELKSKSDTDKDKLKTLLEQGAQ).

The protein belongs to the TrpR family. Homodimer.

It localises to the cytoplasm. In terms of biological role, this protein is an aporepressor. When complexed with L-tryptophan it binds the operator region of the trp operon and prevents the initiation of transcription. This is Trp operon repressor homolog from Vibrio campbellii (strain ATCC BAA-1116).